Reading from the N-terminus, the 545-residue chain is CTP synthase (545 aa).

Residues 1–266 (MKTKFIFITG…DQKIAIMLKL (266 aa)) form an amidoligase domain region. S14 contacts CTP. S14 lines the UTP pocket. ATP-binding positions include 15-20 (SLGKGL) and D72. Residues D72 and E140 each coordinate Mg(2+). CTP contacts are provided by residues 147-149 (DIE), 187-192 (KTKPTQ), and K223. UTP is bound by residues 187–192 (KTKPTQ) and K223. The Glutamine amidotransferase type-1 domain maps to 291 to 545 (TIGIVGKYVD…IKASCENKNK (255 aa)). G353 contributes to the L-glutamine binding site. C380 serves as the catalytic Nucleophile; for glutamine hydrolysis. L-glutamine is bound by residues 381-384 (LGMQ), E404, and R472. Active-site residues include H518 and E520.

This sequence belongs to the CTP synthase family. As to quaternary structure, homotetramer.

It carries out the reaction UTP + L-glutamine + ATP + H2O = CTP + L-glutamate + ADP + phosphate + 2 H(+). The catalysed reaction is L-glutamine + H2O = L-glutamate + NH4(+). It catalyses the reaction UTP + NH4(+) + ATP = CTP + ADP + phosphate + 2 H(+). It functions in the pathway pyrimidine metabolism; CTP biosynthesis via de novo pathway; CTP from UDP: step 2/2. With respect to regulation, allosterically activated by GTP, when glutamine is the substrate; GTP has no effect on the reaction when ammonia is the substrate. The allosteric effector GTP functions by stabilizing the protein conformation that binds the tetrahedral intermediate(s) formed during glutamine hydrolysis. Inhibited by the product CTP, via allosteric rather than competitive inhibition. In terms of biological role, catalyzes the ATP-dependent amination of UTP to CTP with either L-glutamine or ammonia as the source of nitrogen. Regulates intracellular CTP levels through interactions with the four ribonucleotide triphosphates. The chain is CTP synthase from Maridesulfovibrio salexigens (strain ATCC 14822 / DSM 2638 / NCIMB 8403 / VKM B-1763) (Desulfovibrio salexigens).